The sequence spans 371 residues: Cytochrome b (371 aa).

4 helical membrane-spanning segments follow: residues 25-45 (FGSM…FLAI), 69-90 (WIMQ…YIHI), 105-125 (WLSG…GYVL), and 170-190 (FFAL…IHII). Residues His-75 and His-89 each coordinate heme b. Heme b-binding residues include His-174 and His-188. His-193 contacts a ubiquinone. The next 4 membrane-spanning stretches (helical) occupy residues 218 to 238 (YKDT…LSFS), 280 to 300 (LGGT…PFTH), 312 to 332 (LAQM…WTAS), and 339 to 358 (FIII…IMNP).

This sequence belongs to the cytochrome b family. In terms of assembly, the cytochrome bc1 complex contains 3 respiratory subunits (MT-CYB, CYC1 and UQCRFS1), 2 core proteins (UQCRC1 and UQCRC2) and probably 6 low-molecular weight proteins. Requires heme b as cofactor.

The protein resides in the mitochondrion inner membrane. Component of the ubiquinol-cytochrome c reductase complex (complex III or cytochrome b-c1 complex) that is part of the mitochondrial respiratory chain. The b-c1 complex mediates electron transfer from ubiquinol to cytochrome c. Contributes to the generation of a proton gradient across the mitochondrial membrane that is then used for ATP synthesis. This chain is Cytochrome b (MT-CYB), found in Sinomicrurus kelloggi (Kellogg's coral snake).